A 61-amino-acid chain; its full sequence is Large ribosomal subunit protein uL30 (61 aa).

It belongs to the universal ribosomal protein uL30 family. Part of the 50S ribosomal subunit.

In Jannaschia sp. (strain CCS1), this protein is Large ribosomal subunit protein uL30.